Consider the following 64-residue polypeptide: Defensin-like protein 123 (64 aa).

4 disulfides stabilise this stretch: cysteine 19–cysteine 62, cysteine 29–cysteine 49, cysteine 34–cysteine 56, and cysteine 38–cysteine 58.

This sequence belongs to the DEFL family.

The protein is Defensin-like protein 123 of Arabidopsis thaliana (Mouse-ear cress).